The primary structure comprises 304 residues: Histone H1.8 (304 aa).

Over residues 1–24 (MAPGSVSSVSSSSFPSRDTSPSGS) the composition is skewed to low complexity. Disordered regions lie at residues 1–38 (MAPG…PSCR), 110–248 (SKAK…NSVA), and 270–304 (TVQE…NTQA). One can recognise an H15 domain in the interval 45–123 (RNPTMLHMVL…GATGSFKLVP (79 aa)). The segment covering 132 to 144 (APKAGRGAAGAKE) has biased composition (low complexity). 3 stretches are compositionally biased toward basic and acidic residues: residues 153–166 (LKKD…MEKG), 189–202 (KPKE…KQDK), and 225–237 (ANAH…EKSK). The Nuclear localization signal signature appears at 154–170 (KKDQVGKATMEKGQKRR). Polar residues predominate over residues 270-281 (TVQETKVPTPSQ).

It belongs to the histone H1/H5 family. As to expression, oocyte-specific.

It localises to the cytoplasm. Its subcellular location is the nucleus. It is found in the chromosome. In terms of biological role, may play a key role in the control of gene expression during oogenesis and early embryogenesis, presumably through the perturbation of chromatin structure. Essential for meiotic maturation of germinal vesicle-stage oocytes. The somatic type linker histone H1c is rapidly replaced by H1oo in a donor nucleus transplanted into an oocyte. The greater mobility of H1oo as compared to H1c may contribute to this rapid replacement and increased instability of the embryonic chromatin structure. The rapid replacement of H1c with H1oo may play an important role in nuclear remodeling. The chain is Histone H1.8 from Mus musculus (Mouse).